Consider the following 169-residue polypeptide: Large ribosomal subunit protein uL18 (169 aa).

The protein belongs to the universal ribosomal protein uL18 family. As to quaternary structure, part of the 50S ribosomal subunit. Contacts the 5S and 23S rRNAs.

In terms of biological role, this is one of the proteins that bind and probably mediate the attachment of the 5S RNA into the large ribosomal subunit, where it forms part of the central protuberance. This Methanothrix thermoacetophila (strain DSM 6194 / JCM 14653 / NBRC 101360 / PT) (Methanosaeta thermophila) protein is Large ribosomal subunit protein uL18.